The following is a 384-amino-acid chain: Autophagy-related protein 25 (384 aa).

2 coiled-coil regions span residues 132–236 (KETA…RRAS) and 342–379 (KKNNQTDKDQEIASLRNRLSEMEQNYERVLATMEQWKT). The segment at 224-247 (ESRLSNMNKRRASPRDDAEAEPKR) is disordered. A compositionally biased stretch (basic and acidic residues) spans 236 to 247 (SPRDDAEAEPKR).

It belongs to the ADIP family.

It localises to the preautophagosomal structure membrane. Functionally, specifically required for selective degradation of peroxisomes via macropexophagy. This Pichia angusta (Yeast) protein is Autophagy-related protein 25 (ATG25).